The following is a 1462-amino-acid chain: uncharacterized protein (1462 aa).

Residues 119-139 form a helical membrane-spanning segment; that stretch reads TGYITSLCLSAILKFFSFRII. Residues Ser-411 and Ser-420 each carry the phosphoserine modification. In terms of domain architecture, SEC7 spans 541–730; sequence TLIESKKRKA…SEIYKAIKEN (190 aa). Residues 1102–1139 form an HEAT repeat; that stretch reads ENSEDWGLFSKLCNLLNDKNIVVRNQSLSLFHQLVNKY.

The protein resides in the cytoplasm. It is found in the golgi apparatus membrane. This is an uncharacterized protein from Schizosaccharomyces pombe (strain 972 / ATCC 24843) (Fission yeast).